An 808-amino-acid polypeptide reads, in one-letter code: Probable potassium transporter 3 (808 aa).

At 1 to 34 (MPVADCESGLSPADVTGAGAANGNPGHWRSYYRH) the chain is on the cytoplasmic side. A helical transmembrane segment spans residues 35–55 (VLLLAYQSCGVVYGDLSTSPL). Residues 56–81 (YVYKSTFIIGSLRRFQDEEIVFGVFS) lie on the Extracellular side of the membrane. The chain crosses the membrane as a helical span at residues 82 to 102 (LVFWTLTLIPLLKYVFIVLAA). Over 103–167 (DDNGEGGTFA…FLENHRKSRT (65 aa)) the chain is Cytoplasmic. Residues 168 to 188 (FLLVTVLFGASLVIGDGVLTP) traverse the membrane as a helical segment. Over 189-204 (PMSVLSSFSGLQVHST) the chain is Extracellular. Residues 205-225 (ALTSGEVEILSCTVLVCLFMV) traverse the membrane as a helical segment. The Cytoplasmic portion of the chain corresponds to 226–232 (QHWGTHR). A helical membrane pass occupies residues 233–253 (VAFLFAPVVIVWLLLLGALGV). The Extracellular segment spans residues 254–283 (YNIVVWNPRVLRALSPYYLVRFFQHTGKDG). Residues 284 to 304 (WISLGGILLSMTGTEAMYADL) form a helical membrane-spanning segment. Residues 305–313 (GHFTAASIR) are Cytoplasmic-facing. The chain crosses the membrane as a helical span at residues 314–334 (VAFVGLIYPCLVLQYMGQAAF). Residues 335–354 (LSKSPHCDIHFVFFESIPTG) lie on the Extracellular side of the membrane. A helical membrane pass occupies residues 355–375 (IFWPVLVIATLAAIVGSQAVI). Over 376-406 (SATFSIVRQCTALGCFPRVKIVHTSRRIHGQ) the chain is Cytoplasmic. The helical transmembrane segment at 407–427 (IYSPEINWILMLLCIAVTMGL) threads the bilayer. Residues 428–439 (RDTTLIGNAYGM) are Extracellular-facing. Residues 440 to 460 (ACAGVMLVTTLLMALVIVFVW) form a helical membrane-spanning segment. The Cytoplasmic portion of the chain corresponds to 461–464 (QYSC). The chain crosses the membrane as a helical span at residues 465–485 (LVAALFLVAFGVVEAVYLSAA). Topologically, residues 486–491 (LMKVPQ) are extracellular. A helical membrane pass occupies residues 492-512 (GGWLPLVLSLVFVAVMYVWHY). Residues 513 to 808 (GTRRKHQFDV…LIEVGMIYYV (296 aa)) lie on the Cytoplasmic side of the membrane.

Belongs to the HAK/KUP transporter (TC 2.A.72.3) family.

Its subcellular location is the membrane. In terms of biological role, high-affinity potassium transporter. The sequence is that of Probable potassium transporter 3 (HAK3) from Oryza sativa subsp. japonica (Rice).